Consider the following 196-residue polypeptide: Proteasome subunit beta 1 (196 aa).

A propeptide spans Met-1–Gly-6 (removed in mature form; by autocatalysis). Thr-7 (nucleophile) is an active-site residue.

It belongs to the peptidase T1B family. In terms of assembly, the 20S proteasome core is composed of 14 alpha and 14 beta subunits that assemble into four stacked heptameric rings, resulting in a barrel-shaped structure. The two inner rings, each composed of seven catalytic beta subunits, are sandwiched by two outer rings, each composed of seven alpha subunits. The catalytic chamber with the active sites is on the inside of the barrel. Has a gated structure, the ends of the cylinder being occluded by the N-termini of the alpha-subunits. Is capped at one or both ends by the proteasome regulatory ATPase, PAN.

It is found in the cytoplasm. It carries out the reaction Cleavage of peptide bonds with very broad specificity.. The formation of the proteasomal ATPase PAN-20S proteasome complex, via the docking of the C-termini of PAN into the intersubunit pockets in the alpha-rings, triggers opening of the gate for substrate entry. Interconversion between the open-gate and close-gate conformations leads to a dynamic regulation of the 20S proteasome proteolysis activity. Functionally, component of the proteasome core, a large protease complex with broad specificity involved in protein degradation. This Pyrococcus furiosus (strain ATCC 43587 / DSM 3638 / JCM 8422 / Vc1) protein is Proteasome subunit beta 1.